The following is a 145-amino-acid chain: MQLPTISRTALKDVGSTAGGTVFDVKLTECPQALNGQQVGLFFESGGTVDYTSGNLFAYRADSQGVEQVPQTKADNVQANLDGSAIHLGRNKGAQAAQTFLVSQTAGSSTYGATLRYLACYIRSGAGSIVAGNLRSQVGFSVMYP.

Belongs to the fimbrial protein family.

It is found in the fimbrium. The chain is Protein FimA (fimA) from Bordetella pertussis.